The following is a 1116-amino-acid chain: uncharacterized protein (1116 aa).

4 consecutive EF-hand domains span residues 8 to 43, 42 to 77, 166 to 201, and 292 to 327; these read EEQT…SGLA, LAPQ…VALA, LSTE…INLL, and LPED…IKLK. 3 EH domains span residues 9–106, 134–224, and 259–348; these read EQTA…DSSK, EMTR…AAST, and DLTS…VAPL. Residues Asp305, Asn307, Asn309, Lys311, and Glu316 each contribute to the Ca(2+) site. 7 disordered regions span residues 360–454, 703–774, 812–890, 909–978, 1004–1024, 1044–1066, and 1095–1116; these read PSVV…NSPT, SVNL…ASTV, TSLS…NTSA, PFAT…SPQI, TTTH…ENQY, SNEV…DDEL, and QAAE…AGHH. Pro residues predominate over residues 371 to 381; that stretch reads NPNPTLAPNPT. Polar residues predominate over residues 401-416; sequence FSPTLAPQHTSSNATK. Residues 565–707 are a coiled coil; that stretch reads KAQTEQVNRE…EDGLKSVNLT (143 aa). Polar residues predominate over residues 723–749; the sequence is SFTSNGITTDKPTLPDTTSSVPTQHNS. 2 stretches are compositionally biased toward low complexity: residues 755 to 774 and 812 to 827; these read NTLR…ASTV and TSLS…SLDS. Positions 864–890 are enriched in polar residues; that stretch reads SKLTGSARNTAEPVENTSAEPIENTSA. Acidic residues predominate over residues 957–969; that stretch reads EIDDDESSSDEEP. Acidic residues-rich tracts occupy residues 1055–1066 and 1104–1116; these read TANESDNDDDEL and NSST…AGHH.

It is found in the cytoplasm. The protein localises to the cytoskeleton. This is an uncharacterized protein from Schizosaccharomyces pombe (strain 972 / ATCC 24843) (Fission yeast).